A 355-amino-acid polypeptide reads, in one-letter code: Tabersonine 16-O-methyltransferase (355 aa).

S-adenosyl-L-methionine is bound by residues 198-201 (IGGG), aspartate 222, 222-223 (DL), 242-243 (DM), and lysine 256. Catalysis depends on histidine 260, which acts as the Proton acceptor.

This sequence belongs to the class I-like SAM-binding methyltransferase superfamily. Cation-independent O-methyltransferase family. COMT subfamily. In terms of assembly, homodimer. Expressed in leaves and flowers. Detected in stems and roots. In leaves, expressed in epidermal cells.

The protein localises to the cytoplasm. It catalyses the reaction 16-hydroxytabersonine + S-adenosyl-L-methionine = 16-methoxytabersonine + S-adenosyl-L-homocysteine + H(+). It functions in the pathway alkaloid biosynthesis; vindoline biosynthesis. 16-O-methyltransferase involved in the biosynthesis of vindoline. Highly specific for 16-hydroxytabersonine. No activity with tabersonine, 3-hydroxytyramine, 4-hydroxytyramine, 5-hydroxytryptamine (5HT), 2,3-dihydro-3-hydroxytabersonine, lochnericine, hoerhammericine, 16-hydroxy-2,3-dihydro-3-hydroxytabersonine, 16-hydroxylochnericine, 16-hydroxyhoerhammericine, quercetin, kaempferol and caffeic acid as substrates. This chain is Tabersonine 16-O-methyltransferase, found in Catharanthus roseus (Madagascar periwinkle).